The following is a 111-amino-acid chain: Ribonuclease P protein component (111 aa).

It belongs to the RnpA family. As to quaternary structure, consists of a catalytic RNA component (M1 or rnpB) and a protein subunit.

The catalysed reaction is Endonucleolytic cleavage of RNA, removing 5'-extranucleotides from tRNA precursor.. Functionally, RNaseP catalyzes the removal of the 5'-leader sequence from pre-tRNA to produce the mature 5'-terminus. It can also cleave other RNA substrates such as 4.5S RNA. The protein component plays an auxiliary but essential role in vivo by binding to the 5'-leader sequence and broadening the substrate specificity of the ribozyme. This chain is Ribonuclease P protein component, found in Streptococcus thermophilus (strain CNRZ 1066).